Consider the following 105-residue polypeptide: Anti-sigma factor RsrA (105 aa).

Zn(2+) is bound by residues C11, H37, C41, and C44. C11 and C44 form a disulfide bridge. A contributes to redox-sensitivity region spans residues 33-47; it reads KFEHHFEECSPCLEK. The interval 86-105 is disordered; the sequence is QSVPEHDVAAAPSSSAPQES. Residues 94–105 are compositionally biased toward low complexity; sequence AAAPSSSAPQES.

Belongs to the zinc-associated anti-sigma factor (ZAS) superfamily. As to quaternary structure, interacts with cognate sigma factor SigR under reducing but not oxiding conditions. Treatment with the thiol-oxidzing agent diamide inhibits the interaction, while incubation with thioredoxin (trxA) stimulates the interaction. Requires Zn(2+) as cofactor. Under oxidizing conditions up to 3 disulfide bonds are formed. A single disulfide bond inhibits binding to SigR. Cys-11 forms a disulfide bond with either Cys-44 (the major bind) or Cys-41 (a minor bond).

Its function is as follows. A redox-regulated anti-sigma factor for extracytoplasmic function (ECF) sigma factor SigR, and a key sensor of disulfide stress. Holds SigR, its cognate ECF sigma factor, in an inactive form, inhibiting its sigma activity under reducing but not oxidizing conditions; oxidation and reduction of the anti-sigma factor is reversible. Mycothiol (MSH) is competent for reduction of RsrA, allowing it to bind to SigR. In conjunction with its cognate sigma factor SigR may sense the intracellular level of reduced MSH. Probably releases SigR during oxidative stress. This Streptomyces coelicolor (strain ATCC BAA-471 / A3(2) / M145) protein is Anti-sigma factor RsrA (rsrA).